Consider the following 295-residue polypeptide: Ribosomal protein L11 methyltransferase (295 aa).

Residues Thr150, Gly171, Asp193, and Asn232 each coordinate S-adenosyl-L-methionine.

Belongs to the methyltransferase superfamily. PrmA family.

It localises to the cytoplasm. It carries out the reaction L-lysyl-[protein] + 3 S-adenosyl-L-methionine = N(6),N(6),N(6)-trimethyl-L-lysyl-[protein] + 3 S-adenosyl-L-homocysteine + 3 H(+). Functionally, methylates ribosomal protein L11. The sequence is that of Ribosomal protein L11 methyltransferase from Neisseria meningitidis serogroup A / serotype 4A (strain DSM 15465 / Z2491).